The sequence spans 261 residues: MTHQTHAYHMVNPSPWPLTGALSALLMTSGLAMWFHFNSTILLMIGLTTNTLTMYQWWRDVIRESTFQGHHTPTVQKGLRYGMILFIISEVLFFTGFFWAFYHSSLAPTPELGGCWPPTGIHPLNPLEVPLLNTSVLLASGVSITWAHHSLMEGNRYPMLQALFITIALGVYFTLLQASEYYEAPFTISDGIYGSTFFVATGFHGLHVIIGSTFLIVCFFRQLKFHFTSNHHFGFEAAAWYWHFVDVVWLFLYVSIYWWGS.

Residues 1–15 are Mitochondrial matrix-facing; sequence MTHQTHAYHMVNPSP. A helical membrane pass occupies residues 16–34; that stretch reads WPLTGALSALLMTSGLAMW. The Mitochondrial intermembrane segment spans residues 35–40; that stretch reads FHFNST. The helical transmembrane segment at 41–66 threads the bilayer; sequence ILLMIGLTTNTLTMYQWWRDVIREST. Over 67–72 the chain is Mitochondrial matrix; that stretch reads FQGHHT. Residues 73–105 form a helical membrane-spanning segment; it reads PTVQKGLRYGMILFIISEVLFFTGFFWAFYHSS. Residues 106–128 are Mitochondrial intermembrane-facing; sequence LAPTPELGGCWPPTGIHPLNPLE. The chain crosses the membrane as a helical span at residues 129 to 152; that stretch reads VPLLNTSVLLASGVSITWAHHSLM. At 153–155 the chain is on the mitochondrial matrix side; that stretch reads EGN. Residues 156-183 form a helical membrane-spanning segment; it reads RYPMLQALFITIALGVYFTLLQASEYYE. Topologically, residues 184-190 are mitochondrial intermembrane; that stretch reads APFTISD. A helical membrane pass occupies residues 191-223; it reads GIYGSTFFVATGFHGLHVIIGSTFLIVCFFRQL. The Mitochondrial matrix segment spans residues 224 to 232; it reads KFHFTSNHH. A helical transmembrane segment spans residues 233–256; sequence FGFEAAAWYWHFVDVVWLFLYVSI. Over 257-261 the chain is Mitochondrial intermembrane; sequence YWWGS.

This sequence belongs to the cytochrome c oxidase subunit 3 family. As to quaternary structure, component of the cytochrome c oxidase (complex IV, CIV), a multisubunit enzyme composed of 14 subunits. The complex is composed of a catalytic core of 3 subunits MT-CO1, MT-CO2 and MT-CO3, encoded in the mitochondrial DNA, and 11 supernumerary subunits COX4I, COX5A, COX5B, COX6A, COX6B, COX6C, COX7A, COX7B, COX7C, COX8 and NDUFA4, which are encoded in the nuclear genome. The complex exists as a monomer or a dimer and forms supercomplexes (SCs) in the inner mitochondrial membrane with NADH-ubiquinone oxidoreductase (complex I, CI) and ubiquinol-cytochrome c oxidoreductase (cytochrome b-c1 complex, complex III, CIII), resulting in different assemblies (supercomplex SCI(1)III(2)IV(1) and megacomplex MCI(2)III(2)IV(2)).

Its subcellular location is the mitochondrion inner membrane. The enzyme catalyses 4 Fe(II)-[cytochrome c] + O2 + 8 H(+)(in) = 4 Fe(III)-[cytochrome c] + 2 H2O + 4 H(+)(out). Its function is as follows. Component of the cytochrome c oxidase, the last enzyme in the mitochondrial electron transport chain which drives oxidative phosphorylation. The respiratory chain contains 3 multisubunit complexes succinate dehydrogenase (complex II, CII), ubiquinol-cytochrome c oxidoreductase (cytochrome b-c1 complex, complex III, CIII) and cytochrome c oxidase (complex IV, CIV), that cooperate to transfer electrons derived from NADH and succinate to molecular oxygen, creating an electrochemical gradient over the inner membrane that drives transmembrane transport and the ATP synthase. Cytochrome c oxidase is the component of the respiratory chain that catalyzes the reduction of oxygen to water. Electrons originating from reduced cytochrome c in the intermembrane space (IMS) are transferred via the dinuclear copper A center (CU(A)) of subunit 2 and heme A of subunit 1 to the active site in subunit 1, a binuclear center (BNC) formed by heme A3 and copper B (CU(B)). The BNC reduces molecular oxygen to 2 water molecules using 4 electrons from cytochrome c in the IMS and 4 protons from the mitochondrial matrix. The polypeptide is Cytochrome c oxidase subunit 3 (MT-CO3) (Raphicerus melanotis (Cape grysbok)).